A 285-amino-acid polypeptide reads, in one-letter code: ATP synthase gamma chain (285 aa).

This sequence belongs to the ATPase gamma chain family. As to quaternary structure, F-type ATPases have 2 components, CF(1) - the catalytic core - and CF(0) - the membrane proton channel. CF(1) has five subunits: alpha(3), beta(3), gamma(1), delta(1), epsilon(1). CF(0) has three main subunits: a, b and c.

The protein resides in the cell membrane. Its function is as follows. Produces ATP from ADP in the presence of a proton gradient across the membrane. The gamma chain is believed to be important in regulating ATPase activity and the flow of protons through the CF(0) complex. This is ATP synthase gamma chain from Dehalococcoides mccartyi (strain ATCC BAA-2266 / KCTC 15142 / 195) (Dehalococcoides ethenogenes (strain 195)).